Reading from the N-terminus, the 145-residue chain is Large ribosomal subunit protein uL15 (145 aa).

Positions Met-1–Arg-13 are enriched in basic and acidic residues. The disordered stretch occupies residues Met-1–Tyr-56. The segment covering Lys-14–Gly-26 has biased composition (basic residues).

This sequence belongs to the universal ribosomal protein uL15 family. In terms of assembly, part of the 50S ribosomal subunit.

Its function is as follows. Binds to the 23S rRNA. The polypeptide is Large ribosomal subunit protein uL15 (Mycoplasma mobile (strain ATCC 43663 / 163K / NCTC 11711) (Mesomycoplasma mobile)).